Here is a 131-residue protein sequence, read N- to C-terminus: Transcription antitermination protein NusB (131 aa).

Belongs to the NusB family.

In terms of biological role, involved in transcription antitermination. Required for transcription of ribosomal RNA (rRNA) genes. Binds specifically to the boxA antiterminator sequence of the ribosomal RNA (rrn) operons. The chain is Transcription antitermination protein NusB from Ligilactobacillus salivarius (strain UCC118) (Lactobacillus salivarius).